A 478-amino-acid polypeptide reads, in one-letter code: Putative multidrug resistance outer membrane protein MdtQ (478 aa).

The N-terminal stretch at 1–21 (MNRDSFYPAIACFPLLLMLAG) is a signal peptide. Cys22 is lipidated: N-palmitoyl cysteine. Residue Cys22 is the site of S-diacylglycerol cysteine attachment.

It belongs to the outer membrane factor (OMF) (TC 1.B.17) family.

It localises to the cell outer membrane. Could be involved in resistance to puromycin, acriflavine and tetraphenylarsonium chloride. The polypeptide is Putative multidrug resistance outer membrane protein MdtQ (mdtQ) (Shigella flexneri).